A 58-amino-acid polypeptide reads, in one-letter code: MKRQKRDRFERAHTQGFKAGLHGRSKDNCPYQTQDDFRSHWLGGWRDAMEARNTGLFR.

Residues 1–28 (MKRQKRDRFERAHTQGFKAGLHGRSKDN) are disordered.

Belongs to the ribosome modulation factor family.

It localises to the cytoplasm. Functionally, during stationary phase, converts 70S ribosomes to an inactive dimeric form (100S ribosomes). This chain is Ribosome modulation factor, found in Idiomarina loihiensis (strain ATCC BAA-735 / DSM 15497 / L2-TR).